We begin with the raw amino-acid sequence, 739 residues long: Vascular cell adhesion protein 1 (739 aa).

The first 24 residues, 1–24 (MPRKMVVIFGASNILWMVFAVSQA), serve as a signal peptide directing secretion. Ig-like C2-type domains follow at residues 25 to 105 (SKME…KKLE), 109 to 212 (QVEI…KERE), 223 to 309 (PRNT…LIVQ), 312 to 399 (PFTV…IKVD), 408 to 506 (EVEM…QTLY), 511 to 595 (PRDT…VELI), and 600 to 684 (PKDI…LTLD). Over 25-698 (SKMEIFLEPR…ENNKDYFSPE (674 aa)) the chain is Extracellular. Cystine bridges form between Cys47-Cys95, Cys52-Cys99, Cys137-Cys195, Cys246-Cys291, and Cys335-Cys383. Residues Asn76 and Asn77 are each glycosylated (N-linked (GlcNAc...) asparagine). Asn273 is a glycosylation site (N-linked (GlcNAc...) asparagine). A glycan (N-linked (GlcNAc...) asparagine) is linked at Asn531. Cys534 and Cys579 are oxidised to a cystine. The chain crosses the membrane as a helical span at residues 699–720 (LLVLYCASSLIIPAIGMIIYFA). The Cytoplasmic segment spans residues 721–739 (RRANMKGSYSLVEAQKSKV).

Cleaved by the metalloproteinase ADAM17 to generate the soluble form. In terms of processing, sialoglycoprotein. Post-translationally, ubiquitinated by TRIM65 via 'Lys-48'-linked ubiquitination; leading to proteasomal degradation.

It is found in the cell membrane. Its subcellular location is the secreted. In terms of biological role, cell adhesion glycoprotein predominantly expressed on the surface of endothelial cells that plays an important role in immune surveillance and inflammation. Acts as a major regulator of leukocyte adhesion to the endothelium through interaction with different types of integrins. During inflammatory responses, binds ligands on the surface of activated endothelial cells to initiate the activation of calcium channels and the plasma membrane-associated small GTPase RAC1 leading to leukocyte transendothelial migration. Also serves as a quality-control checkpoint for entry into bone marrow by providing a 'don't-eat-me' stamping in the context of major histocompatibility complex (MHC) class-I presentation. The polypeptide is Vascular cell adhesion protein 1 (VCAM1) (Canis lupus familiaris (Dog)).